The sequence spans 431 residues: Pyroglutamylated RF-amide peptide receptor (431 aa).

Over 1-46 (MQALNITPEQFSRLLRDHNLTREQFIALYRLRPLVYTPELPGRAKL) the chain is Extracellular. An N-linked (GlcNAc...) asparagine glycan is attached at Asn19. Residues 47–67 (ALVLTGVLIFALALFGNALVF) traverse the membrane as a helical segment. At 68 to 81 (YVVTRSKAMRTVTN) the chain is on the cytoplasmic side. A helical membrane pass occupies residues 82–102 (IFICSLALSDLLITFFCIPVT). Residues 103–120 (MLQNISDNWLGGAFICKM) lie on the Extracellular side of the membrane. The helical transmembrane segment at 121–141 (VPFVQSTAVVTEILTMTCIAV) threads the bilayer. At 142 to 162 (ERHQGLVHPFKMKWQYTNRRA) the chain is on the cytoplasmic side. Residues 163–183 (FTMLGVVWLVAVIVGSPMWHV) traverse the membrane as a helical segment. Topologically, residues 184 to 212 (QQLEIKYDFLYEKEHICCLEEWTSPVHQK) are extracellular. The chain crosses the membrane as a helical span at residues 213-233 (IYTTFILVILFLLPLMVMLIL). Residues 234–271 (YSKIGYELWIKKRVGDGSVLRTIHGKEMSKIARKKKRA) lie on the Cytoplasmic side of the membrane. A helical transmembrane segment spans residues 272-292 (VIMMVTVVALFAVCWAPFHVV). Over 293 to 311 (HMMIEYSNFEKEYDDVTIK) the chain is Extracellular. Residues 312 to 332 (MIFAIVQIIGFSNSICNPIVY) traverse the membrane as a helical segment. The Cytoplasmic segment spans residues 333-431 (AFMNENFKKN…AENSPLDSGH (99 aa)).

This sequence belongs to the G-protein coupled receptor 1 family. Expressed widely in the brain with high levels in the hypothalamus, trigeminal ganglia and vestibular neurons, and moderate levels in the amygdala, cortex, pituitary, hippocampus, thalamus, caudate nucleus and medulla oblongata. In peripheral tissues, expressed at high levels in the retina and at moderate levels in the heart, kidney, testis and thyroid.

Its subcellular location is the cell membrane. Receptor for the orexigenic neuropeptide QRFP. The activity of this receptor is mediated by G proteins that modulate adenylate cyclase activity and intracellular calcium levels. The chain is Pyroglutamylated RF-amide peptide receptor (QRFPR) from Homo sapiens (Human).